The sequence spans 351 residues: Hepatocyte nuclear factor 3-gamma (351 aa).

Positions 52-73 (PGGLPASPLPTGPLAPPAPTAP) are enriched in pro residues. The tract at residues 52-94 (PGGLPASPLPTGPLAPPAPTAPLGPTFPGLGASTGGGSSSGYG) is disordered. The segment covering 83 to 94 (ASTGGGSSSGYG) has biased composition (gly residues). A DNA-binding region (fork-head) is located at residues 118-212 (KPPYSYISLI…ENGCYLRRQK (95 aa)). The tract at residues 218 to 275 (EKVKKGGGGSSASRNSAGSASTATAPAATVASTPQPQPPPPEPEAQGGDEVGALDCGS) is disordered. Residues 228 to 251 (SASRNSAGSASTATAPAATVASTP) are compositionally biased toward low complexity.

It is found in the nucleus. Transcription activator for a number of liver genes such as AFP, albumin, tyrosine aminotransferase, PEPCK, etc. Interacts with the cis-acting regulatory regions of these genes. The sequence is that of Hepatocyte nuclear factor 3-gamma (FOXA3) from Bos taurus (Bovine).